A 262-amino-acid polypeptide reads, in one-letter code: Phycoerythrobilin:ferredoxin oxidoreductase (262 aa).

Belongs to the HY2 family.

It catalyses the reaction (3Z)-phycoerythrobilin + oxidized 2[4Fe-4S]-[ferredoxin] = 15,16-dihydrobiliverdin + reduced 2[4Fe-4S]-[ferredoxin] + 2 H(+). Its function is as follows. Catalyzes the two-electron reduction of the C2 and C3(1) diene system of 15,16-dihydrobiliverdin. The chain is Phycoerythrobilin:ferredoxin oxidoreductase (pebB) from Parasynechococcus marenigrum (strain WH8102).